A 261-amino-acid polypeptide reads, in one-letter code: MAGASAKVVAMLLSVLATYGFAAGVVYTNDWLPAKATWYGQPNGAGPDDNGGACGFKNTNQYPFMSMTSCGNEPLFQDGKGCGACYQIRCTNNPSCSGQPRTVIITDMNYYPVARYHFDLSGTAFGAMARPGLNDQLRHAGIIDIQFRRVPCYHRGLYVNFHVEAGSNPVYLAVLVEFANKDGTVVQLDVMESLPSGKPTRVWTPMRRSWGSIWRLDANHRLQGPFSLRMVSESGQTVIAHQVIPANWRANTNYGSKVQFR.

The first 24 residues, 1–24 (MAGASAKVVAMLLSVLATYGFAAG), serve as a signal peptide directing secretion. The region spanning 51-157 (GGACGFKNTN…RRVPCYHRGL (107 aa)) is the Expansin-like EG45 domain. Cystine bridges form between cysteine 54–cysteine 82, cysteine 85–cysteine 152, and cysteine 90–cysteine 96. Residues 170–256 (VYLAVLVEFA…NWRANTNYGS (87 aa)) enclose the Expansin-like CBD domain.

The protein belongs to the expansin family. Expansin B subfamily. As to expression, expressed in roots.

It is found in the secreted. It localises to the cell wall. Its subcellular location is the membrane. Functionally, may cause loosening and extension of plant cell walls by disrupting non-covalent bonding between cellulose microfibrils and matrix glucans. No enzymatic activity has been found. May be required for rapid internodal elongation in deepwater rice during submergence. In Oryza sativa subsp. japonica (Rice), this protein is Expansin-B2 (EXPB2).